A 387-amino-acid polypeptide reads, in one-letter code: 1-deoxy-D-xylulose 5-phosphate reductoisomerase (387 aa).

Residues Thr10, Gly11, Ser12, Ile13, and Asn124 each contribute to the NADPH site. Lys125 is a binding site for 1-deoxy-D-xylulose 5-phosphate. An NADPH-binding site is contributed by Glu126. Asp150 contacts Mn(2+). Positions 151, 152, 176, and 199 each coordinate 1-deoxy-D-xylulose 5-phosphate. Glu152 is a Mn(2+) binding site. Gly205 is an NADPH binding site. 1-deoxy-D-xylulose 5-phosphate-binding residues include Ser212, Asn217, Lys218, and Glu221. Glu221 is a Mn(2+) binding site.

Belongs to the DXR family. Mg(2+) serves as cofactor. Requires Mn(2+) as cofactor.

It carries out the reaction 2-C-methyl-D-erythritol 4-phosphate + NADP(+) = 1-deoxy-D-xylulose 5-phosphate + NADPH + H(+). It participates in isoprenoid biosynthesis; isopentenyl diphosphate biosynthesis via DXP pathway; isopentenyl diphosphate from 1-deoxy-D-xylulose 5-phosphate: step 1/6. Catalyzes the NADPH-dependent rearrangement and reduction of 1-deoxy-D-xylulose-5-phosphate (DXP) to 2-C-methyl-D-erythritol 4-phosphate (MEP). This chain is 1-deoxy-D-xylulose 5-phosphate reductoisomerase, found in Clostridium beijerinckii (strain ATCC 51743 / NCIMB 8052) (Clostridium acetobutylicum).